We begin with the raw amino-acid sequence, 1045 residues long: Probable sucrose-phosphate synthase (1045 aa).

Composition is skewed to basic and acidic residues over residues 93 to 115 (ENEE…REAT) and 124 to 137 (EGEK…DSTR). Disordered stretches follow at residues 93–141 (ENEE…PRLP), 222–243 (WSYG…DDDD), and 662–692 (IASS…SDSL). Residues 664-674 (SSRQRQPQWQR) are compositionally biased toward low complexity.

The protein belongs to the glycosyltransferase 1 family. As to quaternary structure, homodimer or homotetramer. As to expression, predominantly active in tap root.

It carries out the reaction beta-D-fructose 6-phosphate + UDP-alpha-D-glucose = sucrose 6(F)-phosphate + UDP + H(+). It participates in glycan biosynthesis; sucrose biosynthesis; sucrose from D-fructose 6-phosphate and UDP-alpha-D-glucose: step 1/2. With respect to regulation, activity is regulated by phosphorylation and moderated by concentration of metabolites and light. Its function is as follows. Plays a role in photosynthetic sucrose synthesis by catalyzing the rate-limiting step of sucrose biosynthesis from UDP-glucose and fructose- 6-phosphate. Involved in the regulation of carbon partitioning in the leaves of plants. May regulate the synthesis of sucrose and therefore play a major role as a limiting factor in the export of photoassimilates out of the leaf. Plays a role for sucrose availability that is essential for plant growth and fiber elongation. The protein is Probable sucrose-phosphate synthase (SPS) of Beta vulgaris (Sugar beet).